The primary structure comprises 166 residues: Lipoprotein signal peptidase (166 aa).

Transmembrane regions (helical) follow at residues 9–29 (ASGA…FDQL), 45–65 (ALTS…FGFL), 71–91 (WQRW…CFLL), and 100–120 (FSLS…DRLV). Catalysis depends on residues D126 and D144. The helical transmembrane segment at 135–155 (WHFPAFNLADSAITIGAVLLI) threads the bilayer.

The protein belongs to the peptidase A8 family.

The protein resides in the cell inner membrane. The catalysed reaction is Release of signal peptides from bacterial membrane prolipoproteins. Hydrolyzes -Xaa-Yaa-Zaa-|-(S,diacylglyceryl)Cys-, in which Xaa is hydrophobic (preferably Leu), and Yaa (Ala or Ser) and Zaa (Gly or Ala) have small, neutral side chains.. The protein operates within protein modification; lipoprotein biosynthesis (signal peptide cleavage). In terms of biological role, this protein specifically catalyzes the removal of signal peptides from prolipoproteins. The polypeptide is Lipoprotein signal peptidase (Burkholderia multivorans (strain ATCC 17616 / 249)).